The sequence spans 271 residues: Acyl-[acyl-carrier-protein]--UDP-N-acetylglucosamine O-acyltransferase (271 aa).

It belongs to the transferase hexapeptide repeat family. LpxA subfamily. In terms of assembly, homotrimer.

It is found in the cytoplasm. It carries out the reaction a (3R)-hydroxyacyl-[ACP] + UDP-N-acetyl-alpha-D-glucosamine = a UDP-3-O-[(3R)-3-hydroxyacyl]-N-acetyl-alpha-D-glucosamine + holo-[ACP]. The protein operates within glycolipid biosynthesis; lipid IV(A) biosynthesis; lipid IV(A) from (3R)-3-hydroxytetradecanoyl-[acyl-carrier-protein] and UDP-N-acetyl-alpha-D-glucosamine: step 1/6. In terms of biological role, involved in the biosynthesis of lipid A, a phosphorylated glycolipid that anchors the lipopolysaccharide to the outer membrane of the cell. This is Acyl-[acyl-carrier-protein]--UDP-N-acetylglucosamine O-acyltransferase from Agrobacterium fabrum (strain C58 / ATCC 33970) (Agrobacterium tumefaciens (strain C58)).